A 208-amino-acid chain; its full sequence is Octanoyltransferase (208 aa).

Residues 30 to 208 form the BPL/LPL catalytic domain; sequence GTASEAVFIL…ILKQEFYKIF (179 aa). Substrate-binding positions include 69–76, 142–144, and 155–157; these read RGGKFTYH, SIG, and GVA. The active-site Acyl-thioester intermediate is C173.

It belongs to the LipB family.

The protein localises to the cytoplasm. It catalyses the reaction octanoyl-[ACP] + L-lysyl-[protein] = N(6)-octanoyl-L-lysyl-[protein] + holo-[ACP] + H(+). Its pathway is protein modification; protein lipoylation via endogenous pathway; protein N(6)-(lipoyl)lysine from octanoyl-[acyl-carrier-protein]: step 1/2. Catalyzes the transfer of endogenously produced octanoic acid from octanoyl-acyl-carrier-protein onto the lipoyl domains of lipoate-dependent enzymes. Lipoyl-ACP can also act as a substrate although octanoyl-ACP is likely to be the physiological substrate. The polypeptide is Octanoyltransferase (Orientia tsutsugamushi (strain Boryong) (Rickettsia tsutsugamushi)).